The chain runs to 60 residues: Large ribosomal subunit protein uL30 (60 aa).

This sequence belongs to the universal ribosomal protein uL30 family. As to quaternary structure, part of the 50S ribosomal subunit.

This is Large ribosomal subunit protein uL30 from Amoebophilus asiaticus (strain 5a2).